The following is an 87-amino-acid chain: Small ribosomal subunit protein bS20 (87 aa).

This sequence belongs to the bacterial ribosomal protein bS20 family.

In terms of biological role, binds directly to 16S ribosomal RNA. The chain is Small ribosomal subunit protein bS20 from Parvibaculum lavamentivorans (strain DS-1 / DSM 13023 / NCIMB 13966).